The primary structure comprises 279 residues: uncharacterized protein (279 aa).

The protein belongs to the PhzF family.

This is an uncharacterized protein from Vibrio cholerae serotype O1 (strain ATCC 39315 / El Tor Inaba N16961).